The chain runs to 316 residues: Olfactory receptor 10H4 (316 aa).

Residues 1–26 (MPSQNYSIISEFNLFGFSAFPQHLLP) lie on the Extracellular side of the membrane. A glycan (N-linked (GlcNAc...) asparagine) is linked at Asn5. A helical membrane pass occupies residues 27–47 (ILFLLYLLMFLFTLLGNLLIM). Topologically, residues 48 to 55 (ATIWIEHR) are cytoplasmic. Residues 56-76 (LHTPMYLFLCTLSVSEILFTV) traverse the membrane as a helical segment. At 77-100 (AITPRMLADLLSTHHSITFVACAN) the chain is on the extracellular side. A disulfide bridge links Cys98 with Cys190. Residues 101 to 121 (QMFFSFMFGFTHSFLLLVMGY) traverse the membrane as a helical segment. Residues 122–140 (DRYVAICHPLRYNVLMSPR) lie on the Cytoplasmic side of the membrane. A helical membrane pass occupies residues 141–161 (DCAHLVACTWAGGSVMGMMVT). The Extracellular portion of the chain corresponds to 162–198 (TIVFHLTFCGSNVIHHFFCHVLSLLKLACENKTSSVI). Residues 199–219 (MGVMLVCVTALIGCLFLIILS) traverse the membrane as a helical segment. At 220 to 239 (YVFIVAAILRIPSAEGRHKT) the chain is on the cytoplasmic side. The helical transmembrane segment at 240-260 (FSTCVSHLTVVVTHYSFASFI) threads the bilayer. Residues 261–273 (YLKPKGLHSMYSD) are Extracellular-facing. A helical membrane pass occupies residues 274–294 (ALMATTYTVFTPFLSPIIFSL). Residues 295-316 (RNKELKNAINKNFYRKFCPPSS) lie on the Cytoplasmic side of the membrane.

It belongs to the G-protein coupled receptor 1 family.

The protein localises to the cell membrane. In terms of biological role, odorant receptor. In Homo sapiens (Human), this protein is Olfactory receptor 10H4 (OR10H4).